We begin with the raw amino-acid sequence, 320 residues long: Ferrochelatase (320 aa).

H194 and E275 together coordinate Fe cation.

It belongs to the ferrochelatase family. In terms of assembly, monomer.

The protein resides in the cytoplasm. It carries out the reaction heme b + 2 H(+) = protoporphyrin IX + Fe(2+). It functions in the pathway porphyrin-containing compound metabolism; protoheme biosynthesis; protoheme from protoporphyrin-IX: step 1/1. Its function is as follows. Catalyzes the ferrous insertion into protoporphyrin IX. The sequence is that of Ferrochelatase from Escherichia coli O81 (strain ED1a).